The chain runs to 848 residues: Coiled-coil and C2 domain-containing protein 1B (848 aa).

The span at 1–10 (MPGPRPRKGP) shows a compositional bias: basic residues. Disordered stretches follow at residues 1 to 21 (MPGP…ETAK) and 53 to 75 (ALTG…PLPM). A coiled-coil region spans residues 165–193 (LQALLEERIRNYREAAASAKEAGEAAKAR). Disordered regions lie at residues 217–276 (EDEI…DPDP), 326–353 (VDLS…ATQG), 433–460 (DFAE…QDSV), and 476–523 (ALVD…SPSV). Residues 438–448 (PVPPGFPPIPG) show a composition bias toward pro residues. Serine 455 bears the Phosphoserine mark. Acidic residues predominate over residues 476–485 (ALVDDDEESD). 2 stretches are compositionally biased toward low complexity: residues 487-498 (PAQAPLAKKPAQ) and 509-522 (EPKA…LSPS). At serine 583 the chain carries Phosphoserine. Residue threonine 586 is modified to Phosphothreonine. Residues 600 to 626 (LRLSQKAEEVYAQLQKMLQEQQAKCLL) are a coiled coil. The 140-residue stretch at 666–805 (DPPSHHFELK…EKECEIREIM (140 aa)) folds into the C2 domain.

It belongs to the CC2D1 family. Interacts with CHMP4B.

It is found in the nucleus. In terms of biological role, transcription factor that binds specifically to the DRE (dual repressor element) and represses HTR1A gene transcription in neuronal cells. This chain is Coiled-coil and C2 domain-containing protein 1B (Cc2d1b), found in Mus musculus (Mouse).